The sequence spans 571 residues: Proline--tRNA ligase (571 aa).

This sequence belongs to the class-II aminoacyl-tRNA synthetase family. ProS type 1 subfamily. Homodimer.

It is found in the cytoplasm. The catalysed reaction is tRNA(Pro) + L-proline + ATP = L-prolyl-tRNA(Pro) + AMP + diphosphate. Functionally, catalyzes the attachment of proline to tRNA(Pro) in a two-step reaction: proline is first activated by ATP to form Pro-AMP and then transferred to the acceptor end of tRNA(Pro). As ProRS can inadvertently accommodate and process non-cognate amino acids such as alanine and cysteine, to avoid such errors it has two additional distinct editing activities against alanine. One activity is designated as 'pretransfer' editing and involves the tRNA(Pro)-independent hydrolysis of activated Ala-AMP. The other activity is designated 'posttransfer' editing and involves deacylation of mischarged Ala-tRNA(Pro). The misacylated Cys-tRNA(Pro) is not edited by ProRS. The protein is Proline--tRNA ligase of Actinobacillus pleuropneumoniae serotype 5b (strain L20).